The chain runs to 345 residues: Phosphoribosylformylglycinamidine cyclo-ligase (345 aa).

This sequence belongs to the AIR synthase family.

It localises to the cytoplasm. It carries out the reaction 2-formamido-N(1)-(5-O-phospho-beta-D-ribosyl)acetamidine + ATP = 5-amino-1-(5-phospho-beta-D-ribosyl)imidazole + ADP + phosphate + H(+). The protein operates within purine metabolism; IMP biosynthesis via de novo pathway; 5-amino-1-(5-phospho-D-ribosyl)imidazole from N(2)-formyl-N(1)-(5-phospho-D-ribosyl)glycinamide: step 2/2. The polypeptide is Phosphoribosylformylglycinamidine cyclo-ligase (Shewanella baltica (strain OS223)).